A 463-amino-acid polypeptide reads, in one-letter code: uncharacterized protein (463 aa).

Belongs to the mycobacterial PPE family.

This is an uncharacterized protein from Mycobacterium tuberculosis (strain CDC 1551 / Oshkosh).